Here is a 452-residue protein sequence, read N- to C-terminus: Phosphoglucosamine mutase (452 aa).

The Phosphoserine intermediate role is filled by Ser108. Positions 108, 247, 249, and 251 each coordinate Mg(2+). At Ser108 the chain carries Phosphoserine.

Belongs to the phosphohexose mutase family. It depends on Mg(2+) as a cofactor. In terms of processing, activated by phosphorylation.

The catalysed reaction is alpha-D-glucosamine 1-phosphate = D-glucosamine 6-phosphate. Functionally, catalyzes the conversion of glucosamine-6-phosphate to glucosamine-1-phosphate. This chain is Phosphoglucosamine mutase, found in Burkholderia pseudomallei (strain K96243).